The chain runs to 288 residues: MDVTAKYELIGLMAYPIRHSLSPEMQNKALEKAGLPFTYMAFEVDNDSFPGAIEGLKALKMRGTGVSMPNKQLACEYVDELTPAAKLVGAINTIVNDDGYLRGYNTDGTGHIRAIKESGFDIKGKTMVLLGAGGASTAIGAQGAIEGLKEIKLFNRRDEFFDKALAFAQRVNENTDCVVTVTDLADQQAFAEALASADILTNGTKVGMKPLENESLVNDISLLHPGLLVTECVYNPHMTKLLQQAQQAGCKTIDGYGMLLWQGAEQFTLWTGKDFPLEYVKQVMGFGA.

Lys71 and Asp107 together coordinate substrate. NAD(+) is bound by residues 132-135 (AGGA), 155-158 (NRRD), Lys205, 232-235 (CVYN), and Gly255.

The protein belongs to the shikimate dehydrogenase family. As to quaternary structure, homodimer.

It catalyses the reaction L-quinate + NAD(+) = 3-dehydroquinate + NADH + H(+). The enzyme catalyses L-quinate + NADP(+) = 3-dehydroquinate + NADPH + H(+). It carries out the reaction shikimate + NADP(+) = 3-dehydroshikimate + NADPH + H(+). The catalysed reaction is shikimate + NAD(+) = 3-dehydroshikimate + NADH + H(+). The protein operates within metabolic intermediate biosynthesis; chorismate biosynthesis; chorismate from D-erythrose 4-phosphate and phosphoenolpyruvate: step 4/7. The actual biological function of YdiB remains unclear, nor is it known whether 3-dehydroshikimate or quinate represents the natural substrate. Catalyzes the reversible NAD-dependent reduction of both 3-dehydroshikimate (DHSA) and 3-dehydroquinate to yield shikimate (SA) and quinate, respectively. It can use both NAD or NADP for catalysis, however it has higher catalytic efficiency with NAD. This Escherichia coli O81 (strain ED1a) protein is Quinate/shikimate dehydrogenase.